Reading from the N-terminus, the 243-residue chain is TIGR03089 family protein (243 aa).

This sequence belongs to the TIGR03089 family.

The polypeptide is TIGR03089 family protein (Mycobacterium tuberculosis (strain ATCC 25618 / H37Rv)).